We begin with the raw amino-acid sequence, 241 residues long: tRNA pseudouridine synthase B (241 aa).

Aspartate 45 functions as the Nucleophile in the catalytic mechanism.

This sequence belongs to the pseudouridine synthase TruB family. Type 1 subfamily.

It carries out the reaction uridine(55) in tRNA = pseudouridine(55) in tRNA. Responsible for synthesis of pseudouridine from uracil-55 in the psi GC loop of transfer RNAs. This Chlamydia trachomatis serovar L2 (strain ATCC VR-902B / DSM 19102 / 434/Bu) protein is tRNA pseudouridine synthase B.